The primary structure comprises 104 residues: Putative ankyrin repeat protein L677 (104 aa).

3 ANK repeats span residues 16–43 (FNKS…NPNL), 44–73 (DISH…SNSV), and 75–102 (LEAY…NKSI).

The chain is Putative ankyrin repeat protein L677 from Acanthamoeba polyphaga (Amoeba).